A 1090-amino-acid chain; its full sequence is DNA damage-binding protein 1 (1090 aa).

The protein belongs to the DDB1 family. As to quaternary structure, component of the UV-DDB complex, which is composed of DDB1 and DDB2. As to expression, expressed in proliferating tissues. Highly expressed in shoot apical meristem (SAM). Expressed in roots, young leaves, flag leaves, and panicles. Not detected in mature leaves.

Its subcellular location is the nucleus. In terms of biological role, required for DNA repair. Binds to DDB2 to form the UV-damaged DNA-binding protein complex (the UV-DDB complex). The UV-DDB complex may recognize UV-induced DNA damage and recruit proteins of the nucleotide excision repair pathway (the NER pathway) to initiate DNA repair. May function as the substrate recognition module for a DCX (DDB1-CUL4-X-box) E3 ubiquitin-protein ligase complex. This chain is DNA damage-binding protein 1, found in Oryza sativa subsp. japonica (Rice).